The sequence spans 199 residues: Urease accessory protein UreG (199 aa).

Residue Gly-8–Thr-15 coordinates GTP.

This sequence belongs to the SIMIBI class G3E GTPase family. UreG subfamily. In terms of assembly, homodimer. UreH, UreF and UreG form a complex that acts as a GTP-hydrolysis-dependent molecular chaperone, activating the urease apoprotein by helping to assemble the nickel containing metallocenter of UreC. The UreE protein probably delivers the nickel.

It localises to the cytoplasm. Functionally, facilitates the functional incorporation of the urease nickel metallocenter. This process requires GTP hydrolysis, probably effectuated by UreG. This chain is Urease accessory protein UreG, found in Helicobacter pylori (strain G27).